We begin with the raw amino-acid sequence, 121 residues long: UPF0102 protein Mvan_2202 (121 aa).

This sequence belongs to the UPF0102 family.

The sequence is that of UPF0102 protein Mvan_2202 from Mycolicibacterium vanbaalenii (strain DSM 7251 / JCM 13017 / BCRC 16820 / KCTC 9966 / NRRL B-24157 / PYR-1) (Mycobacterium vanbaalenii).